A 1096-amino-acid chain; its full sequence is Cohesin subunit scc-3 (1096 aa).

Polar residues predominate over residues 1–21 (MSETPTDQSPQRMSTRNQARV). Disordered stretches follow at residues 1–53 (MSET…KKRA) and 67–106 (NLNN…ESAE). Positions 261–312 (IELTQSKEKTSKQIEAEKAKLKNNSAGNEKYEALVAQRTQTEERAEEIRQII) form a coiled coil. One can recognise an SCD domain in the interval 320–405 (FVHRYRDVVP…NKFKDRLVSM (86 aa)). Residues 1057–1096 (DNMSVRSGMTVTSNATMRSTASSTRGRGRGRGRSRIADDF) are disordered. Polar residues predominate over residues 1060 to 1073 (SVRSGMTVTSNATM).

The protein belongs to the SCC3 family. Component of the cohesin complex, composed of the smc-1 and smc-3 heterodimer attached via their hinge domain, scc-1 which links them, and scc-3. Interacts with scc-1, smc-1 and tim-1. As to expression, expressed in gonadal cells.

Its subcellular location is the nucleus. The protein resides in the chromosome. In terms of biological role, component of the cohesin complex, a complex required for the cohesion of sister chromatids after DNA replication. The cohesin complex apparently forms a large proteinaceous ring within which sister chromatids can be trapped. At anaphase, the scc-1 subunit of the complex is cleaved and dissociates from chromatin, allowing sister chromatids to segregate. The cohesin complex may also play a role in spindle pole assembly during mitosis. Plays an essential role in cell division during embryonic development. Required for the assembly of the synaptonemal complex between homologous chromosomes to promote sister chromatid cohesion during mitosis and meiosis. Has a role in stabilization of homologous chromosome associations during meiotic synapsis. Required for chromosome segregation during mitosis and meiosis. Plays a role in DNA double-strand break (DSB) repair during meiotic recombination and promotes the assembly of the 9-1-1 cell-cycle checkpoint response complex which is required for inducing apoptosis in response to DNA damage, at DNA damage sites. The protein is Cohesin subunit scc-3 of Caenorhabditis elegans.